A 466-amino-acid chain; its full sequence is Peptidoglycan-N-acetylglucosamine deacetylase PgdA (466 aa).

Residues 1–5 are Cytoplasmic-facing; it reads MKIRW. A helical membrane pass occupies residues 6-26; that stretch reads IRLSLVAILIIAVVFIGVIGF. At 27–466 the chain is on the extracellular side; the sequence is QKYQFSKSRN…FDKTDSRMVK (440 aa). The NodB homology domain occupies 266 to 440; sequence KRIALTFDDG…KLKSQGYEFV (175 aa). Asp-273 functions as the Proton acceptor in the catalytic mechanism. Positions 274, 324, and 328 each coordinate Zn(2+). Residue Tyr-365 participates in substrate binding. His-415 acts as the Proton donor in catalysis.

As to quaternary structure, homodimer. Interacts (via transmembrane domain) with PbpA1 (via transmembrane domain); the interaction is important for the peptidoglycan N-deacetylase function of this protein. Zn(2+) serves as cofactor.

It is found in the cell membrane. The protein resides in the secreted. It localises to the cell wall. It carries out the reaction peptidoglycan-N-acetyl-D-glucosamine + H2O = peptidoglycan-D-glucosamine + acetate.. In terms of biological role, catalyzes the deacetylation of N-acetylglucosamine (GlcNAc) residues in peptidoglycan (PG). Also deacetylates N-acetylated PG. Does not deacetylate N-acetylmuramic acid. Confers host lysozyme resistance. Critical for virulence and escape from innate immune response of the host. Required for intracellular survival of bacteria in macrophages of the host. Required for successful host colonization. Controls the production of inflammatory mediators in the bone marrow derived macrophages (BMMs) of the infected mouse. Suppresses Toll-like receptor 2 (TLR2)-dependent secretion of interleukin 6 (IL-6) and interferon-beta (IFN-beta) in the macrophages of the infected mouse. May decrease accessibility of pattern recognition receptors (PRRs) such as nucleotide-binding oligomerization domain protein (NOD) 1 of the host to the bacterial cell wall components. Protects cells from autolysis induced by lysozyme or by other autolysis-inducing agents. The sequence is that of Peptidoglycan-N-acetylglucosamine deacetylase PgdA from Listeria monocytogenes serotype 1/2a (strain 10403S).